The chain runs to 518 residues: Membrane-bound lytic murein transglycosylase F (518 aa).

An N-terminal signal peptide occupies residues Met-1 to Ala-21. A non-LT domain region spans residues Leu-22–Gly-269. The LT domain stretch occupies residues Asp-270–Asn-518. Glu-314 is a catalytic residue.

This sequence in the N-terminal section; belongs to the bacterial solute-binding protein 3 family. The protein in the C-terminal section; belongs to the transglycosylase Slt family.

The protein resides in the cell outer membrane. It catalyses the reaction Exolytic cleavage of the (1-&gt;4)-beta-glycosidic linkage between N-acetylmuramic acid (MurNAc) and N-acetylglucosamine (GlcNAc) residues in peptidoglycan, from either the reducing or the non-reducing ends of the peptidoglycan chains, with concomitant formation of a 1,6-anhydrobond in the MurNAc residue.. In terms of biological role, murein-degrading enzyme that degrades murein glycan strands and insoluble, high-molecular weight murein sacculi, with the concomitant formation of a 1,6-anhydromuramoyl product. Lytic transglycosylases (LTs) play an integral role in the metabolism of the peptidoglycan (PG) sacculus. Their lytic action creates space within the PG sacculus to allow for its expansion as well as for the insertion of various structures such as secretion systems and flagella. The protein is Membrane-bound lytic murein transglycosylase F of Escherichia coli (strain ATCC 8739 / DSM 1576 / NBRC 3972 / NCIMB 8545 / WDCM 00012 / Crooks).